The following is a 125-amino-acid chain: Cardioactive peptide (125 aa).

The signal sequence occupies residues methionine 1–alanine 22. A propeptide spanning residues alanine 23–lysine 42 is cleaved from the precursor. A disulfide bond links cysteine 47 and cysteine 53. At cysteine 53 the chain carries Cysteine amide. Residues arginine 57–glutamine 125 constitute a propeptide that is removed on maturation.

As to expression, abdominal perivisceral organ; major neurohemal release site. Expressed in 116 neurons in post-embryonic central nervous system. Nine pairs of cells are observed in the brain, 4.5 pairs in the subesophageal ganglion, three pairs in each thoracic ganglion (T1-T3), three pairs in the first abdominal ganglion (A1), five pairs each in the second to sixth abdominal ganglia (A2-A6) and 7.5 pairs in the terminal ganglion. Expressed in every ganglion in each post-embryonic stage, except in the thoracic ganglia of first- and second-instar larvae. Colocalizes with CAP2b in median neurosecretory cells during the last larval instar through to adults.

Its subcellular location is the secreted. Cardioregulatory neurohormone that increases heart beat rate during adult wing inflation; has no effect on beat amplitude. The effect of CCAP is both ino- and chronotropic. This Manduca sexta (Tobacco hawkmoth) protein is Cardioactive peptide.